Consider the following 156-residue polypeptide: Small ribosomal subunit protein uS7 (156 aa).

This sequence belongs to the universal ribosomal protein uS7 family. In terms of assembly, part of the 30S ribosomal subunit. Contacts proteins S9 and S11.

Functionally, one of the primary rRNA binding proteins, it binds directly to 16S rRNA where it nucleates assembly of the head domain of the 30S subunit. Is located at the subunit interface close to the decoding center, probably blocks exit of the E-site tRNA. This Vibrio atlanticus (strain LGP32) (Vibrio splendidus (strain Mel32)) protein is Small ribosomal subunit protein uS7.